We begin with the raw amino-acid sequence, 112 residues long: Protein ORF1 (112 aa).

Positions 1-10 (MEGTDWSGWG) are enriched in low complexity. The interval 1–20 (MEGTDWSGWGDDSDFPWPKG) is disordered. Residues 51-71 (IAFVILIVSLFVLLLGVLLAC) form a helical membrane-spanning segment.

The protein resides in the host membrane. In Snake adenovirus serotype 1 (SnAdV-1), this protein is Protein ORF1.